Here is a 489-residue protein sequence, read N- to C-terminus: NADH-quinone oxidoreductase subunit N (489 aa).

The next 14 helical transmembrane spans lie at 6–26 (VLFI…AVML), 37–57 (VFYI…PASS), 66–86 (LLIV…GSLA), 105–125 (FYLL…AHHL), 127–147 (AIFI…GYAF), 159–179 (YMVL…LIYA), 204–224 (ITLL…KLSL), 239–259 (PAPV…AVLL), 271–291 (FFYS…NLLA), 299–319 (RLLG…LIAC), 329–349 (VALY…VVSL), 377–397 (SAMT…GFIG), 408–430 (FHLW…YYLR), and 452–472 (ALTT…LLGI).

It belongs to the complex I subunit 2 family. As to quaternary structure, NDH-1 is composed of 14 different subunits. Subunits NuoA, H, J, K, L, M, N constitute the membrane sector of the complex.

The protein resides in the cell inner membrane. It carries out the reaction a quinone + NADH + 5 H(+)(in) = a quinol + NAD(+) + 4 H(+)(out). NDH-1 shuttles electrons from NADH, via FMN and iron-sulfur (Fe-S) centers, to quinones in the respiratory chain. The immediate electron acceptor for the enzyme in this species is believed to be ubiquinone. Couples the redox reaction to proton translocation (for every two electrons transferred, four hydrogen ions are translocated across the cytoplasmic membrane), and thus conserves the redox energy in a proton gradient. The sequence is that of NADH-quinone oxidoreductase subunit N from Tolumonas auensis (strain DSM 9187 / NBRC 110442 / TA 4).